The sequence spans 447 residues: Cobyrinate a,c-diamide synthase (447 aa).

In terms of domain architecture, GATase cobBQ-type spans 247-435 (RIGVAIDEAF…IHIHAASCPQ (189 aa)). Cys329 (nucleophile) is an active-site residue.

It belongs to the CobB/CbiA family. Mg(2+) is required as a cofactor.

The catalysed reaction is cob(II)yrinate + 2 L-glutamine + 2 ATP + 2 H2O = cob(II)yrinate a,c diamide + 2 L-glutamate + 2 ADP + 2 phosphate + 2 H(+). It carries out the reaction Ni-sirohydrochlorin + 2 L-glutamine + 2 ATP + 2 H2O = Ni-sirohydrochlorin a,c-diamide + 2 L-glutamate + 2 ADP + 2 phosphate + 2 H(+). Its pathway is cofactor biosynthesis; adenosylcobalamin biosynthesis; cob(II)yrinate a,c-diamide from sirohydrochlorin (anaerobic route): step 10/10. In terms of biological role, catalyzes the ATP-dependent amidation of the two carboxylate groups at positions a and c of cobyrinate, using either L-glutamine or ammonia as the nitrogen source. Involved in the biosynthesis of the unique nickel-containing tetrapyrrole coenzyme F430, the prosthetic group of methyl-coenzyme M reductase (MCR), which plays a key role in methanogenesis and anaerobic methane oxidation. Catalyzes the ATP-dependent amidation of the two carboxylate groups at positions a and c of Ni-sirohydrochlorin, using L-glutamine or ammonia as the nitrogen source. In Methanothermobacter thermautotrophicus (strain ATCC 29096 / DSM 1053 / JCM 10044 / NBRC 100330 / Delta H) (Methanobacterium thermoautotrophicum), this protein is Cobyrinate a,c-diamide synthase.